Reading from the N-terminus, the 306-residue chain is Aspartate carbamoyltransferase catalytic subunit (306 aa).

Residues Arg51 and Thr52 each coordinate carbamoyl phosphate. Lys79 contributes to the L-aspartate binding site. Residues Arg101, His130, and Gln133 each contribute to the carbamoyl phosphate site. L-aspartate is bound by residues Arg163 and Arg215. Gly256 and Pro257 together coordinate carbamoyl phosphate.

It belongs to the aspartate/ornithine carbamoyltransferase superfamily. ATCase family. Heterododecamer (2C3:3R2) of six catalytic PyrB chains organized as two trimers (C3), and six regulatory PyrI chains organized as three dimers (R2).

The catalysed reaction is carbamoyl phosphate + L-aspartate = N-carbamoyl-L-aspartate + phosphate + H(+). Its pathway is pyrimidine metabolism; UMP biosynthesis via de novo pathway; (S)-dihydroorotate from bicarbonate: step 2/3. Catalyzes the condensation of carbamoyl phosphate and aspartate to form carbamoyl aspartate and inorganic phosphate, the committed step in the de novo pyrimidine nucleotide biosynthesis pathway. The polypeptide is Aspartate carbamoyltransferase catalytic subunit (Ehrlichia ruminantium (strain Welgevonden)).